A 591-amino-acid polypeptide reads, in one-letter code: Calnexin (591 aa).

An N-terminal signal peptide occupies residues 1 to 20 (MEGKWLLCLLLVLGTAAIQA). The Lumenal portion of the chain corresponds to 21–482 (HDGHDDDMID…QMLEAAEERP (462 aa)). Residues Ser-75 and Asp-118 each coordinate Ca(2+). Lys-138 is modified (N6-acetyllysine). Cys-161 and Cys-195 are disulfide-bonded. An alpha-D-glucoside is bound by residues Tyr-165, Lys-167, Tyr-186, and Asp-193. Residues 261-347 (GNLLNDMTPP…EKPEDWDEDM (87 aa)) are disordered. The span at 275–320 (REIEDPEDRKPEDWDERPKIADPDAVKPDDWDEDAPSKIPDEEATK) shows a compositional bias: basic and acidic residues. The p domain (Extended arm) stretch occupies residues 277 to 410 (IEDPEDRKPE…RKIPNPDFFE (134 aa)). Repeat copies occupy residues 279 to 291 (DPED…WDER), 296 to 308 (DPDA…WDED), 315 to 327 (DEEA…WLDD), 334 to 346 (DPDA…WDED), and 349 to 359 (GEWEAPQIANP). 4 X approximate repeats regions lie at residues 279 to 346 (DPED…WDED) and 349 to 406 (GEWE…IPNP). The span at 324-347 (WLDDEPEYIPDPDAEKPEDWDEDM) shows a compositional bias: acidic residues. The interaction with PPIB stretch occupies residues 327-360 (DEPEYIPDPDAEKPEDWDEDMDGEWEAPQIANPK). The cysteines at positions 361 and 367 are disulfide-linked. Repeat copies occupy residues 368-378 (GVWQRPMIDNP), 382-392 (GKWKPPMIDNP), and 396-406 (GIWKPRKIPNP). Glu-426 serves as a coordination point for an alpha-D-glucoside. Residue Asp-437 participates in Ca(2+) binding. A helical transmembrane segment spans residues 483–503 (WLWVVYILTVALPVFLVILFC). Residues Cys-503 and Cys-504 are each lipidated (S-palmitoyl cysteine). The Cytoplasmic portion of the chain corresponds to 504–591 (CSGKKQSNAM…SPRNRKPRRE (88 aa)). Positions 504-591 (CSGKKQSNAM…SPRNRKPRRE (88 aa)) are sufficient to mediate interaction with SGIP1. Residues 514 to 538 (EYKKTDAPQPDVKDEEGKEEEKNKG) show a composition bias toward basic and acidic residues. The interval 514–591 (EYKKTDAPQP…SPRNRKPRRE (78 aa)) is disordered. At Ser-553 the chain carries Phosphoserine. Positions 555–568 (AEEDGGTGSQDEED) are enriched in acidic residues. The residue at position 561 (Thr-561) is a Phosphothreonine. Ser-563 is subject to Phosphoserine; by MAPK3. The residue at position 582 (Ser-582) is a Phosphoserine.

The protein belongs to the calreticulin family. Interacts with MAPK3/ERK1. Interacts with KCNH2. Associates with ribosomes. Interacts with SGIP1; involved in negative regulation of endocytosis. The palmitoylated form interacts with the ribosome-translocon complex component SSR1, promoting efficient folding of glycoproteins. Interacts with SERPINA2P/SERPINA2 and with the S and Z variants of SERPINA1. Interacts with PPIB. Interacts with ZNRF4. Interacts with SMIM22. Interacts with TMX2. Interacts with TMEM35A/NACHO and CHRNA7. Interacts with reticulophagy regulators RETREG2 and RETREG3. Interacts with DNM1L; may form part of a larger protein complex at the ER-mitochondrial interface during mitochondrial fission. Interacts with ADAM7. Post-translationally, phosphorylated at Ser-563 by MAPK3/ERK1. Phosphorylation by MAPK3/ERK1 increases its association with ribosomes. Palmitoylation by DHHC6 leads to the preferential localization to the perinuclear rough ER. It mediates the association of calnexin with the ribosome-translocon complex (RTC) which is required for efficient folding of glycosylated proteins. In terms of processing, ubiquitinated, leading to proteasomal degradation. Probably ubiquitinated by ZNRF4.

The protein localises to the endoplasmic reticulum membrane. It is found in the mitochondrion membrane. The protein resides in the melanosome membrane. Its function is as follows. Calcium-binding protein that interacts with newly synthesized monoglucosylated glycoproteins in the endoplasmic reticulum. It may act in assisting protein assembly and/or in the retention within the ER of unassembled protein subunits. It seems to play a major role in the quality control apparatus of the ER by the retention of incorrectly folded proteins. Associated with partial T-cell antigen receptor complexes that escape the ER of immature thymocytes, it may function as a signaling complex regulating thymocyte maturation. Additionally it may play a role in receptor-mediated endocytosis at the synapse. This is Calnexin (Canx) from Rattus norvegicus (Rat).